The chain runs to 286 residues: Aminoglycoside N(3)-acetyltransferase III (286 aa).

This sequence belongs to the antibiotic N-acetyltransferase family.

The catalysed reaction is a 2-deoxystreptamine antibiotic + acetyl-CoA = an N(3)-acetyl-2-deoxystreptamine antibiotic + CoA + H(+). Functionally, resistance to antibiotics containing the 2-deoxy-streptamine ring including gentamicin, kanamycin, tobramycin, neomycin and apramycin. The sequence is that of Aminoglycoside N(3)-acetyltransferase III (aacC2) from Acinetobacter baumannii.